Consider the following 231-residue polypeptide: MPTKTKKRSVLEAERKKIGLDHAPKEDESVDDNFPKQFKRLLQQKEYHESKKKEIKKGNLKNKKKKDYGKIQRLPGERLSEFSQRVNKAIPVSFKSGPSKIDEFTDKKEKKKIAKRKEKRERDWNEIEENFEDKTWEADTTGQFIQIESRKKRKNSPDPWANLQTKPSFGETVQAPPELPELKIKETKYLENVPKVNNMGQTESMARRQALGKQRLELIEKYRELMKTKRK.

Disordered regions lie at residues 1 to 33 (MPTK…VDDN), 47 to 68 (YHES…KKDY), 93 to 132 (SFKS…ENFE), and 147 to 178 (IESR…APPE). Residues 9–27 (SVLEAERKKIGLDHAPKED) show a composition bias toward basic and acidic residues. Basic residues-rich tracts occupy residues 53–67 (KEIK…KKKD) and 109–119 (EKKKIAKRKEK).

This sequence belongs to the UPF0653 family.

The protein resides in the nucleus. It localises to the nucleolus. This Schizosaccharomyces pombe (strain 972 / ATCC 24843) (Fission yeast) protein is UPF0653 protein C607.02c.